Reading from the N-terminus, the 773-residue chain is Probable dipeptidyl peptidase 4 (773 aa).

The first 18 residues, 1–18, serve as a signal peptide directing secretion; the sequence is MKLSVLSVLLVSVAQAAA. 6 N-linked (GlcNAc...) asparagine glycosylation sites follow: asparagine 37, asparagine 80, asparagine 112, asparagine 220, asparagine 471, and asparagine 496. Catalysis depends on serine 619, which acts as the Charge relay system. Asparagine 671 is a glycosylation site (N-linked (GlcNAc...) asparagine). Catalysis depends on charge relay system residues aspartate 696 and histidine 731.

It belongs to the peptidase S9B family.

The protein localises to the secreted. It carries out the reaction Release of an N-terminal dipeptide, Xaa-Yaa-|-Zaa-, from a polypeptide, preferentially when Yaa is Pro, provided Zaa is neither Pro nor hydroxyproline.. Its function is as follows. Extracellular dipeptidyl-peptidase which removes N-terminal dipeptides sequentially from polypeptides having unsubstituted N-termini provided that the penultimate residue is proline. This chain is Probable dipeptidyl peptidase 4 (dpp4), found in Emericella nidulans (strain FGSC A4 / ATCC 38163 / CBS 112.46 / NRRL 194 / M139) (Aspergillus nidulans).